The chain runs to 378 residues: POU domain, class 3, transcription factor 2 (378 aa).

3 disordered regions span residues 1 to 28 (MATT…SMQQ), 86 to 118 (SPRD…HDSR), and 151 to 205 (LIPG…TPTS). The span at 164-181 (MRDAHEDHHSPHLSDHGH) shows a compositional bias: basic and acidic residues. Positions 200-274 (EDTPTSDDLE…LLNKWLEEAD (75 aa)) constitute a POU-specific domain. Position 279 is a phosphoserine (Ser279). The homeobox DNA-binding region spans 292–351 (KRKKRTSIEVSVKGALESHFLKCPKPAASEITSLADSLQLEKEVVRVWFCNRRQKEKRMT). Residues 347-378 (EKRMTPPGGPLPGTEDVYGDTPPHHGVQTPVQ) are disordered.

This sequence belongs to the POU transcription factor family. Class-3 subfamily. In terms of tissue distribution, predominantly expressed in the central nervous system, with strong expression in the cerebellum.

The protein resides in the nucleus. Functionally, transcription factor that may play important roles in patterning the embryonic brain. The protein is POU domain, class 3, transcription factor 2 (pou3f2) of Danio rerio (Zebrafish).